We begin with the raw amino-acid sequence, 89 residues long: Cell division topological specificity factor (89 aa).

This sequence belongs to the MinE family.

Functionally, prevents the cell division inhibition by proteins MinC and MinD at internal division sites while permitting inhibition at polar sites. This ensures cell division at the proper site by restricting the formation of a division septum at the midpoint of the long axis of the cell. This chain is Cell division topological specificity factor, found in Serratia proteamaculans (strain 568).